A 201-amino-acid polypeptide reads, in one-letter code: Probable phosphopantothenoylcysteine decarboxylase (201 aa).

FMN-binding positions include 20–22 (GSV), 45–47 (SKS), 98–101 (SANT), and A132. Substrate is bound by residues N134 and 164–166 (KLA). The active-site Proton donor is the C167. A substrate-binding site is contributed by M175.

Belongs to the HFCD (homooligomeric flavin containing Cys decarboxylase) superfamily. Homotrimer. Requires FMN as cofactor. In terms of tissue distribution, expressed in roots, shoots, leaves, flowers, developing siliques and seeds.

It catalyses the reaction N-[(R)-4-phosphopantothenoyl]-L-cysteine + H(+) = (R)-4'-phosphopantetheine + CO2. It participates in cofactor biosynthesis; coenzyme A biosynthesis; CoA from (R)-pantothenate: step 3/5. Its function is as follows. Involved in plant growth and salt and osmotic tolerance. Catalyzes the decarboxylation of 4'-phosphopantothenoylcysteine to 4'-phosphopantetheine, a key step in coenzyme A biosynthesis. The enzyme is also able to decarboxylate pantothenoylcysteine to pantothenoylcysteamine. In Arabidopsis thaliana (Mouse-ear cress), this protein is Probable phosphopantothenoylcysteine decarboxylase (HAL3B).